Here is a 73-residue protein sequence, read N- to C-terminus: Small ribosomal subunit protein bS18 (73 aa).

Belongs to the bacterial ribosomal protein bS18 family. Part of the 30S ribosomal subunit. Forms a tight heterodimer with protein bS6.

Its function is as follows. Binds as a heterodimer with protein bS6 to the central domain of the 16S rRNA, where it helps stabilize the platform of the 30S subunit. The protein is Small ribosomal subunit protein bS18 of Neorickettsia sennetsu (strain ATCC VR-367 / Miyayama) (Ehrlichia sennetsu).